Consider the following 101-residue polypeptide: Iron-sulfur cluster assembly protein CyaY (101 aa).

Belongs to the frataxin family.

Involved in iron-sulfur (Fe-S) cluster assembly. May act as a regulator of Fe-S biogenesis. The protein is Iron-sulfur cluster assembly protein CyaY of Rickettsia akari (strain Hartford).